The following is a 169-amino-acid chain: Ribosome maturation factor RimM (169 aa).

The region spanning 94–168 (EEGQYYYHQI…KVIVELLEGL (75 aa)) is the PRC barrel domain.

Belongs to the RimM family. Binds ribosomal protein uS19.

It localises to the cytoplasm. An accessory protein needed during the final step in the assembly of 30S ribosomal subunit, possibly for assembly of the head region. Essential for efficient processing of 16S rRNA. May be needed both before and after RbfA during the maturation of 16S rRNA. It has affinity for free ribosomal 30S subunits but not for 70S ribosomes. The protein is Ribosome maturation factor RimM of Limosilactobacillus fermentum (strain NBRC 3956 / LMG 18251) (Lactobacillus fermentum).